We begin with the raw amino-acid sequence, 90 residues long: UPF0367 protein Ava_2513 (90 aa).

It belongs to the UPF0367 family.

This Trichormus variabilis (strain ATCC 29413 / PCC 7937) (Anabaena variabilis) protein is UPF0367 protein Ava_2513.